Reading from the N-terminus, the 95-residue chain is MQALIEISDKQFLVQEGDKIFVPKQKAVAGDVIEVKSLMKVGQADSALSEGTAKVKVLDHVRDETIIVFRKKRRKRFQRRNGHRQHMTQVEVMSI.

Belongs to the bacterial ribosomal protein bL21 family. In terms of assembly, part of the 50S ribosomal subunit. Contacts protein L20.

Its function is as follows. This protein binds to 23S rRNA in the presence of protein L20. This is Large ribosomal subunit protein bL21 from Prosthecochloris vibrioformis (Chlorobium vibrioforme).